We begin with the raw amino-acid sequence, 198 residues long: Chitin synthase 2 (198 aa).

Belongs to the chitin synthase family. Class III subfamily.

Its subcellular location is the cell membrane. The catalysed reaction is [(1-&gt;4)-N-acetyl-beta-D-glucosaminyl](n) + UDP-N-acetyl-alpha-D-glucosamine = [(1-&gt;4)-N-acetyl-beta-D-glucosaminyl](n+1) + UDP + H(+). In terms of biological role, polymerizes chitin, a structural polymer of the cell wall and septum, by transferring the sugar moiety of UDP-GlcNAc to the non-reducing end of the growing chitin polymer. This is Chitin synthase 2 (CHS2) from Rhinocladiella atrovirens.